The following is a 234-amino-acid chain: MRLVQLSRHSIAFPSPEGALREPNGLLALGGDLSPARLLMAYQHGIFPWFSPGDPILWWSPDPRAVLWPEKFHLSRSMKRFHNASPYRVTLNYAFDRVIDGCANHRDEGTWITRGIEEAYRRLHELGHAHSIEVWRDQELVGGMYGVSQGALFCGESMFSRQENASKTALLVFCAEFIRHGGKLIDCQVLNSHTASLGAIEIPRRDYLDHLAGLRQQPLASRFWVPRTLFLPRK.

This sequence belongs to the L/F-transferase family.

The protein localises to the cytoplasm. It carries out the reaction N-terminal L-lysyl-[protein] + L-leucyl-tRNA(Leu) = N-terminal L-leucyl-L-lysyl-[protein] + tRNA(Leu) + H(+). The enzyme catalyses N-terminal L-arginyl-[protein] + L-leucyl-tRNA(Leu) = N-terminal L-leucyl-L-arginyl-[protein] + tRNA(Leu) + H(+). It catalyses the reaction L-phenylalanyl-tRNA(Phe) + an N-terminal L-alpha-aminoacyl-[protein] = an N-terminal L-phenylalanyl-L-alpha-aminoacyl-[protein] + tRNA(Phe). Functionally, functions in the N-end rule pathway of protein degradation where it conjugates Leu, Phe and, less efficiently, Met from aminoacyl-tRNAs to the N-termini of proteins containing an N-terminal arginine or lysine. The chain is Leucyl/phenylalanyl-tRNA--protein transferase from Salmonella paratyphi A (strain ATCC 9150 / SARB42).